The sequence spans 305 residues: PI-PLC X domain-containing protein 1 (305 aa).

An N-terminal signal peptide occupies residues 1 to 24 (MSMSTLRHFLWLGALLLATIQVSA). The region spanning 25–189 (LPTAQDLICN…RLIVFVDSKA (165 aa)) is the PI-PLC X-box domain. Active-site residues include histidine 53 and histidine 97. N-linked (GlcNAc...) asparagine glycosylation occurs at asparagine 237.

The protein resides in the secreted. The polypeptide is PI-PLC X domain-containing protein 1 (Arthroderma benhamiae (strain ATCC MYA-4681 / CBS 112371) (Trichophyton mentagrophytes)).